The chain runs to 667 residues: E3 ubiquitin-protein ligase Midline-1 (667 aa).

The RING-type zinc finger occupies 10 to 60 (CPICLELLEDPLLLPCAHSLCFNCAHRILVSHCATNEPVESINAFQCPTCR). Phosphoserine is present on residues S92 and S96. 2 B box-type zinc fingers span residues 116–165 (KVLC…IEPI) and 172–212 (GLMC…VAAL). Positions 119, 122, 134, 137, 142, 145, 150, 159, 175, 178, 198, and 204 each coordinate Zn(2+). Residues 205-264 (RDHQVAALSERYDKLKQNLESNLTNLIKRNTELETLLAKLIQTCQHVEVNASRQEAKLTE) adopt a coiled-coil conformation. Residues 320–379 (LKENDHARFLQTAKNITERVSMATASSQVLIPEINLNDTFDTFALDFSREKKLLECLDYL) enclose the COS domain. The 104-residue stretch at 381-484 (APNPPTIREE…EPGKLKTNSQ (104 aa)) folds into the Fibronectin type-III domain. Over residues 471 to 485 (SRSSEPGKLKTNSQP) the composition is skewed to polar residues. A disordered region spans residues 471 to 524 (SRSSEPGKLKTNSQPFKLDPKSAHRKLKVSHDNLTVERDESSSKKSHTPERFTS). The B30.2/SPRY domain maps to 482–659 (NSQPFKLDPK…IITGLPIPDH (178 aa)). The span at 499-520 (VSHDNLTVERDESSSKKSHTPE) shows a compositional bias: basic and acidic residues. S511 bears the Phosphoserine mark.

The protein belongs to the TRIM/RBCC family. As to quaternary structure, homodimer or heterodimer with MID2. Interacts with IGBP1.

The protein localises to the cytoplasm. It localises to the cytoskeleton. It carries out the reaction S-ubiquitinyl-[E2 ubiquitin-conjugating enzyme]-L-cysteine + [acceptor protein]-L-lysine = [E2 ubiquitin-conjugating enzyme]-L-cysteine + N(6)-ubiquitinyl-[acceptor protein]-L-lysine.. Its function is as follows. Has E3 ubiquitin ligase activity towards IGBP1, promoting its monoubiquitination, which results in deprotection of the catalytic subunit of protein phosphatase PP2A, and its subsequent degradation by polyubiquitination. The sequence is that of E3 ubiquitin-protein ligase Midline-1 (Mid1) from Mus spretus (Western Mediterranean mouse).